The primary structure comprises 347 residues: Phosphoribosylformylglycinamidine cyclo-ligase (347 aa).

Belongs to the AIR synthase family.

It is found in the cytoplasm. It catalyses the reaction 2-formamido-N(1)-(5-O-phospho-beta-D-ribosyl)acetamidine + ATP = 5-amino-1-(5-phospho-beta-D-ribosyl)imidazole + ADP + phosphate + H(+). The protein operates within purine metabolism; IMP biosynthesis via de novo pathway; 5-amino-1-(5-phospho-D-ribosyl)imidazole from N(2)-formyl-N(1)-(5-phospho-D-ribosyl)glycinamide: step 2/2. The chain is Phosphoribosylformylglycinamidine cyclo-ligase from Yersinia pseudotuberculosis serotype O:1b (strain IP 31758).